The sequence spans 678 residues: uncharacterized protein (678 aa).

The interval 1–26 (MGVHFDDNANTTWEATDPGVSSDCDG) is disordered. 9 helical membrane passes run 119 to 139 (LLLL…LIYP), 245 to 265 (SFPC…GGCT), 317 to 337 (AAVV…YDSI), 340 to 360 (YWIN…PPLL), 371 to 391 (ELFS…YVVW), 405 to 425 (IAKV…NVTF), 443 to 463 (GALT…VIQA), 475 to 495 (YFKI…LPGL), and 519 to 539 (AYLF…RWDF).

The protein localises to the vacuole membrane. This is an uncharacterized protein from Saccharomyces cerevisiae (strain ATCC 204508 / S288c) (Baker's yeast).